We begin with the raw amino-acid sequence, 439 residues long: GTPase Der (439 aa).

EngA-type G domains follow at residues 4–168 (PIVA…KDDE) and 177–352 (INIA…DNYT). Residues 10 to 17 (GRPNVGKS), 57 to 61 (DTGGI), 120 to 123 (NKID), 183 to 190 (GKPNVGKS), 230 to 234 (DTAGL), and 295 to 298 (NKWD) contribute to the GTP site. Residues 353–437 (KRVKTGVLND…GIKLEFRERK (85 aa)) form the KH-like domain.

Belongs to the TRAFAC class TrmE-Era-EngA-EngB-Septin-like GTPase superfamily. EngA (Der) GTPase family. As to quaternary structure, associates with the 50S ribosomal subunit.

In terms of biological role, GTPase that plays an essential role in the late steps of ribosome biogenesis. This Clostridium botulinum (strain Kyoto / Type A2) protein is GTPase Der.